The sequence spans 129 residues: Histone H2A-IV (129 aa).

Residues 1–22 (MSGRGKQGGKARAKAKSRSSRA) form a disordered region. An N-acetylserine modification is found at serine 2. Serine 2 is modified (phosphoserine). Lysine 6 carries the N6-(2-hydroxyisobutyryl)lysine modification. N6-acetyllysine occurs at positions 6 and 10. Residues 7-19 (QGGKARAKAKSRS) are compositionally biased toward basic residues. Lysine 10 is subject to N6-(2-hydroxyisobutyryl)lysine; alternate. Lysine 10 carries the post-translational modification N6-lactoyllysine; alternate. Position 10 is an N6-succinyllysine (lysine 10). Glycyl lysine isopeptide (Lys-Gly) (interchain with G-Cter in ubiquitin) cross-links involve residues lysine 14 and lysine 16. Residue lysine 37 is modified to N6-(2-hydroxyisobutyryl)lysine; alternate. N6-(2-hydroxyisobutyryl)lysine is present on residues lysine 75 and lysine 76. N6-(2-hydroxyisobutyryl)lysine; alternate is present on lysine 96. Residue lysine 96 is modified to N6-succinyllysine. An N6-glutaryllysine; alternate modification is found at lysine 96. The residue at position 100 (lysine 100) is an N6-glutaryllysine. An N5-methylglutamine modification is found at glutamine 105. Lysine 119 carries the post-translational modification N6-(2-hydroxyisobutyryl)lysine; alternate. Residues lysine 119 and lysine 120 each carry the N6-glutaryllysine; alternate modification. A Glycyl lysine isopeptide (Lys-Gly) (interchain with G-Cter in ubiquitin) cross-link involves residue lysine 120.

This sequence belongs to the histone H2A family. In terms of assembly, the nucleosome is a histone octamer containing two molecules each of H2A, H2B, H3 and H4 assembled in one H3-H4 heterotetramer and two H2A-H2B heterodimers. The octamer wraps approximately 147 bp of DNA. Monoubiquitination of Lys-120 (H2AK119Ub) gives a specific tag for epigenetic transcriptional repression. Following DNA double-strand breaks (DSBs), it is ubiquitinated through 'Lys-63' linkage of ubiquitin moieties, leading to the recruitment of repair proteins to sites of DNA damage. H2AK119Ub and ionizing radiation-induced 'Lys-63'-linked ubiquitination are distinct events. Post-translationally, phosphorylation on Ser-2 is enhanced during mitosis. Phosphorylation on Ser-2 directly represses transcription. In terms of processing, glutamine methylation at Gln-105 (H2AQ104me) by FBL is specifically dedicated to polymerase I. It is present at 35S ribosomal DNA locus and impairs binding of the FACT complex.

The protein localises to the nucleus. It localises to the chromosome. Core component of nucleosome. Nucleosomes wrap and compact DNA into chromatin, limiting DNA accessibility to the cellular machineries which require DNA as a template. Histones thereby play a central role in transcription regulation, DNA repair, DNA replication and chromosomal stability. DNA accessibility is regulated via a complex set of post-translational modifications of histones, also called histone code, and nucleosome remodeling. In Gallus gallus (Chicken), this protein is Histone H2A-IV.